Here is a 643-residue protein sequence, read N- to C-terminus: Tigger transposable element-derived protein 5 (643 aa).

The tract at residues 1-50 (MYSAGPPAVPAPRRCRRPPPGRPMQPPRPPAPAPVPAARPPPPAPGPRPR) is disordered. Pro residues predominate over residues 20–48 (PGRPMQPPRPPAPAPVPAARPPPPAPGPR). The HTH psq-type domain maps to 52–103 (AVKMAFRKAYSIKDKLQAIERVKGGERQASVCRDFGVPGGTLRGWLKDEPKL). 2 consecutive DNA-binding regions (H-T-H motif) follow at residues 79–99 (QASVCRDFGVPGGTLRGWLKD) and 150–183 (PLIQAQAEAFARQIYGPECTFKASHGWFWRWQKR). In terms of domain architecture, HTH CENPB-type spans 117 to 190 (QRKKMRLANE…QKRHGISSQR (74 aa)). A disordered region spans residues 197-236 (PVAAGPAPGPPVKQEPAQPTRAGPLPDRAASTPAPAEGGY). The region spanning 238-358 (DEQIYNANVT…LQQKAVLLVA (121 aa)) is the DDE-1 domain. The disordered stretch occupies residues 366-395 (EARMPALEESEETRRRCRPEPTGPPEELQT).

This sequence belongs to the tigger transposable element derived protein family.

Its subcellular location is the nucleus. The polypeptide is Tigger transposable element-derived protein 5 (TIGD5) (Bos taurus (Bovine)).